Reading from the N-terminus, the 389-residue chain is MPTPCPPACLSTPGTHRLLPFPDWKAPSWESRKEATCNSSSPGPWAEPTVQGYHPTRRLRAWGGLAGGATFMVIWFFWLWGSAPGSAPVPQSTLTILIWHWPFTNRPPELPGDTCTRYGMASCRLSANRSLLASADAVVFHHRELQTRQSLLPLDQRPHGQPWVWASMESPSNTHGLHRFRGIFNWVLSYRRDSDIFVPYGRLEPLSGPTSPLPAKSRMAAWVISNFQERQQRAKLYRQLAPHLQVDVFGRASGRPLCANCLLPTLARYRFYLAFENSQHRDYITEKFWRNALAAGAVPVALGPPRATYEAFVPPDAFVHVDDFSSARELAVFLVSMNESRYRGFFAWRDRLRVRLLGDWRERFCTICARYPYLPRSQVYEDLESWFQA.

The Cytoplasmic segment spans residues 1–55 (MPTPCPPACLSTPGTHRLLPFPDWKAPSWESRKEATCNSSSPGPWAEPTVQGYHP). Residues 56–78 (TRRLRAWGGLAGGATFMVIWFFW) traverse the membrane as a helical; Signal-anchor for type II membrane protein segment. Over 79–389 (LWGSAPGSAP…YEDLESWFQA (311 aa)) the chain is Lumenal. Cys-115 and Cys-123 are oxidised to a cystine. An N-linked (GlcNAc...) asparagine glycan is attached at Asn-128. A disulfide bridge connects residues Cys-258 and Cys-261. Asn-338 carries N-linked (GlcNAc...) asparagine glycosylation. The cysteines at positions 365 and 368 are disulfide-linked.

This sequence belongs to the glycosyltransferase 10 family. In terms of processing, N-glycosylated. Highly expressed in lung and bone marrow and to a much lesser extent in spleen, salivary gland and skeletal muscle.

It localises to the golgi apparatus. Its subcellular location is the golgi stack membrane. The enzyme catalyses an N-acetyl-alpha-neuraminyl-(2-&gt;3)-beta-D-galactosyl-(1-&gt;4)-N-acetyl-beta-D-glucosaminyl derivative + GDP-beta-L-fucose = an alpha-Neu5Ac-(2-&gt;3)-beta-D-Gal-(1-&gt;4)-[alpha-L-Fuc-(1-&gt;3)]-beta-D-GlcNAc derivative + GDP + H(+). It carries out the reaction an alpha-Neu5Ac-(2-&gt;3)-beta-D-Gal-(1-&gt;4)-beta-D-GlcNAc6S derivative + GDP-beta-L-fucose = an alpha-Neu5Ac-(2-&gt;3)-beta-D-Gal-(1-&gt;4)-[alpha-L-Fuc-(1-&gt;3)]-beta-D-GlcNAc6S derivative + GDP + H(+). It catalyses the reaction a neolactoside IV(3)-alpha-NeuAc-nLc4Cer + GDP-beta-L-fucose = a neolactoside IV(3)-alpha-NeuNAc,III(3)-alpha-Fuc-nLc4Cer + GDP + H(+). The catalysed reaction is a neolactoside VI(3)-alpha-NeuNAc-nLc6Cer + GDP-beta-L-fucose = a neolactoside VI(3)-alpha-NeuAc,V(3)-alphaFuc-nLc6Cer + GDP + H(+). The enzyme catalyses an alpha-Neu5Ac-(2-&gt;3)-beta-D-Gal-(1-&gt;4)-beta-D-GlcNAc-(1-&gt;3)-beta-D-Gal-(1-&gt;4)-[alpha-L-Fuc-(1-&gt;3)]-beta-D-GlcNAc derivative + GDP-beta-L-fucose = an alpha-Neu5Ac-(2-&gt;3)-beta-D-Gal-(1-&gt;4)-[alpha-L-Fuc-(1-&gt;3)]-beta-D-GlcNAc-(1-&gt;3)-beta-D-Gal-(1-&gt;4)-[alpha-L-Fuc-(1-&gt;3)]-beta-D-GlcNAc derivative + GDP + H(+). It carries out the reaction alpha-Neu5Ac-(2-&gt;3)-beta-D-Gal-(1-&gt;4)-beta-D-GlcNAc-(1-&gt;3)-beta-D-Gal-(1-&gt;4)-D-Glc + GDP-beta-L-fucose = alpha-Neu5Ac-(2-&gt;3)-beta-D-Gal-(1-&gt;4)-[alpha-L-Fuc-(1-&gt;3)]-beta-D-GlcNAc-(1-&gt;3)-beta-D-Gal-(1-&gt;4)-D-Glc + GDP + H(+). It catalyses the reaction alpha-Neu5Ac-(2-&gt;3)-beta-D-Gal-(1-&gt;4)-beta-D-GlcNAc-(1-&gt;3)-beta-D-Gal-(1-&gt;4)-[alpha-L-Fuc-(1-&gt;3)]-beta-D-GlcNAc-(1-&gt;3)-beta-D-Gal-(1-&gt;4)-beta-D-GlcNAc + GDP-beta-L-fucose = alpha-Neu5Ac-(2-&gt;3)-beta-D-Gal-(1-&gt;4)-[alpha-L-Fuc-(1-&gt;3)]-beta-D-GlcNAc-(1-&gt;3)-beta-D-Gal-(1-&gt;4)-[alpha-L-Fuc-(1-&gt;3)]-beta-D-GlcNAc-(1-&gt;3)-beta-D-Gal-(1-&gt;4)-beta-D-GlcNAc + GDP + H(+). The catalysed reaction is alpha-Neu5Ac-(2-&gt;3)-beta-D-Gal-(1-&gt;4)-beta-D-GlcNAc-(1-&gt;3)-beta-D-Gal-(1-&gt;4)-beta-D-GlcNAc-(1-&gt;3)-beta-D-Gal-(1-&gt;4)-beta-D-GlcNAc + GDP-beta-L-fucose = alpha-Neu5Ac-(2-&gt;3)-beta-D-Gal-(1-&gt;4)-[alpha-L-Fuc-(1-&gt;3)]-beta-D-GlcNAc-(1-&gt;3)-beta-D-Gal-(1-&gt;4)-beta-D-GlcNAc-(1-&gt;3)-beta-D-Gal-(1-&gt;4)-beta-D-GlcNAc + GDP + H(+). It participates in protein modification; protein glycosylation. Inhibited by NaCl. Inhibited by GDP in a concentration dependent manner, with an IC(50) value of 93 uM. Also inhibited by GMP and GTP. Inhibited by N-ethylmaleimide. Activated by poly(ethylene glycol) by enhancing the thermal stability of FUT7. Activated by Mn2+, Ca2+, and Mg2+. Both panosialin A and B inhibit activity with IC(50) values of 4.8 and 5.3 ug/ml, respectively. Inhibited by gallic acid (GA) and (-)-epigallocatechin gallate (EGCG) in a time-dependent and irreversible manner with IC(50) values of 60 and 700 nM, respectively. Catalyzes the transfer of L-fucose, from a guanosine diphosphate-beta-L-fucose, to the N-acetyl glucosamine (GlcNAc) of a distal alpha2,3 sialylated lactosamine unit of a glycoprotein or a glycolipid-linked sialopolylactosamines chain through an alpha-1,3 glycosidic linkage and participates in the final fucosylation step in the biosynthesis of the sialyl Lewis X (sLe(x)), a carbohydrate involved in cell and matrix adhesion during leukocyte trafficking and fertilization. In vitro, also synthesizes sialyl-dimeric-Lex structures, from VIM-2 structures and both di-fucosylated and trifucosylated structures from mono-fucosylated precursors. However does not catalyze alpha 1-3 fucosylation when an internal alpha 1-3 fucosylation is present in polylactosamine chain and the fucosylation rate of the internal GlcNAc residues is reduced once fucose has been added to the distal GlcNAc. Also catalyzes the transfer of a fucose from GDP-beta-fucose to the 6-sulfated a(2,3)sialylated substrate to produce 6-sulfo sLex mediating significant L-selectin-dependent cell adhesion. Through sialyl-Lewis(x) biosynthesis, can control SELE- and SELP-mediated cell adhesion with leukocytes and allows leukocytes tethering and rolling along the endothelial tissue thereby enabling the leukocytes to accumulate at a site of inflammation. May enhance embryo implantation through sialyl Lewis X (sLeX)-mediated adhesion of embryo cells to endometrium. May affect insulin signaling by up-regulating the phosphorylation and expression of some signaling molecules involved in the insulin-signaling pathway through SLe(x) which is present on the glycans of the INSRR alpha subunit. In Mus musculus (Mouse), this protein is Alpha-(1,3)-fucosyltransferase 7.